Consider the following 220-residue polypeptide: Guanylate kinase (220 aa).

One can recognise a Guanylate kinase-like domain in the interval 14 to 194 (GLMVVISSPS…SYAAIKSIIN (181 aa)). Residue 21-28 (SPSGAGKS) coordinates ATP.

The protein belongs to the guanylate kinase family.

The protein localises to the cytoplasm. The catalysed reaction is GMP + ATP = GDP + ADP. Its function is as follows. Essential for recycling GMP and indirectly, cGMP. The chain is Guanylate kinase from Brucella abortus (strain 2308).